Here is a 514-residue protein sequence, read N- to C-terminus: FAD-dependent monooxygenase CPUR_05423 (514 aa).

FAD contacts are provided by valine 79 and arginine 146. Arginine 227 is a catalytic residue. Aspartate 358 and glycine 371 together coordinate FAD.

Belongs to the paxM FAD-dependent monooxygenase family. FAD is required as a cofactor.

Its pathway is pigment biosynthesis. FAD-dependent monooxygenase; part of the ergochrome gene cluster responsible for the typical purple-black color of the ergot sclerotia. The ergochrome gene cluster produces several ergot pigments including the yellow ergochrome secalonic acid and its derivatives, as well as the red anthraquinones endocrocin and clavorubin. The pathway begins with the synthesis of atrochrysone thioester by the polyketide synthase (PKS) CPUR_05437. The atrochrysone carboxyl ACP thioesterase CPUR_05436 then breaks the thioester bond and releases the atrochrysone carboxylic acid from CPUR_05437. The atrochrysone carboxylic acid is then converted to atrochrysone which is further transformed into emodin anthrone. The next step is performed by the anthrone oxygenase CPUR_05434 that catalyzes the oxidation of emodinanthrone to emodin. Emodin is further modified to yield monodictyphenone via several steps involving CPUR_05427, CPUR_05428, CPUR_05429 and CPUR_05430. The short chain dehydrogenase/reductase CPUR_05418 then catalyzes the C-5 ketoreduction to give the xanthone skeleton of the monomeric units. Ergochromes formation requires further dimerization steps of different xanthone units, probably catalyzed by the cytochrome P450 monooxygenase CPUR_05419. CPUR_05425, CPUR_05426 and CPUR_05431 are unique to Claviceps, thus it is likely that they are involved in further modification of xanthone units or in their dimerization. The yellow ergochromes and the red anthraquinone pigments endocrocin and clavorubin are products from the same PKS derived precursors and the latter are likely shunt products in the pathway of xanthone biosynthesis. It is proposed that atrochrysone carboxylic acid released from the PKS CPUR_05437 can also be converted to endocrocin anthrone which is further oxidized into endocrocin by CPUR_05435. Endocrocin could be then modified to clavorubin, possibly by CPUR_05423 and CPUR_05431. Clavorubin is the principal anthraquinone metabolite produced by the cluster with a much higher yield compared to endocrocin. The protein is FAD-dependent monooxygenase CPUR_05423 of Claviceps purpurea (strain 20.1) (Ergot fungus).